Consider the following 248-residue polypeptide: 4-hydroxy-tetrahydrodipicolinate reductase (248 aa).

Residue D28 participates in NAD(+) binding. An NADP(+)-binding site is contributed by K29. Residues 78–80 (ATT) and 102–105 (SYNM) contribute to the NAD(+) site. H134 (proton donor/acceptor) is an active-site residue. Residue H135 participates in (S)-2,3,4,5-tetrahydrodipicolinate binding. K138 functions as the Proton donor in the catalytic mechanism. 144–145 (GT) serves as a coordination point for (S)-2,3,4,5-tetrahydrodipicolinate.

The protein belongs to the DapB family.

It localises to the cytoplasm. The catalysed reaction is (S)-2,3,4,5-tetrahydrodipicolinate + NAD(+) + H2O = (2S,4S)-4-hydroxy-2,3,4,5-tetrahydrodipicolinate + NADH + H(+). It catalyses the reaction (S)-2,3,4,5-tetrahydrodipicolinate + NADP(+) + H2O = (2S,4S)-4-hydroxy-2,3,4,5-tetrahydrodipicolinate + NADPH + H(+). Its pathway is amino-acid biosynthesis; L-lysine biosynthesis via DAP pathway; (S)-tetrahydrodipicolinate from L-aspartate: step 4/4. Catalyzes the conversion of 4-hydroxy-tetrahydrodipicolinate (HTPA) to tetrahydrodipicolinate. The protein is 4-hydroxy-tetrahydrodipicolinate reductase of Exiguobacterium sibiricum (strain DSM 17290 / CCUG 55495 / CIP 109462 / JCM 13490 / 255-15).